A 303-amino-acid polypeptide reads, in one-letter code: MTQQRTLKNTIRATGVGLHSGDKVYMTLRPAPVDHGVVFRRVDLEPVVEVPADAELVTETTLCTGLTCNGAKIQTVEHLMSALAGLGVDNVIVELSSAELPIMDGSSGPFVFLLQSAGIVEQSKPKRFIRITQTVEVRDGDKVARFEPYEGYKLGFTIEFNHPMIPAKQSRQEIEFSTSAYVKEISRARTFGFMRDLEYMRERNLGLGGSMDNAIVLDEFRVLNEDGLRYTNEFVRHKILDAIGDLYLAGGAILGAYEGFKSGHALNNKLVRALLADQAAWEWVSFPEGTEQPPVTYASPVYA.

Zn(2+) is bound by residues His78, His237, and Asp241. The Proton donor role is filled by His264.

This sequence belongs to the LpxC family. The cofactor is Zn(2+).

It catalyses the reaction a UDP-3-O-[(3R)-3-hydroxyacyl]-N-acetyl-alpha-D-glucosamine + H2O = a UDP-3-O-[(3R)-3-hydroxyacyl]-alpha-D-glucosamine + acetate. It functions in the pathway glycolipid biosynthesis; lipid IV(A) biosynthesis; lipid IV(A) from (3R)-3-hydroxytetradecanoyl-[acyl-carrier-protein] and UDP-N-acetyl-alpha-D-glucosamine: step 2/6. In terms of biological role, catalyzes the hydrolysis of UDP-3-O-myristoyl-N-acetylglucosamine to form UDP-3-O-myristoylglucosamine and acetate, the committed step in lipid A biosynthesis. The chain is UDP-3-O-acyl-N-acetylglucosamine deacetylase from Xanthomonas axonopodis pv. citri (strain 306).